The following is a 1252-amino-acid chain: Guanine nucleotide exchange factor SDC25 (1252 aa).

In terms of domain architecture, SH3 spans 26–97 (QPIDVVECTY…PPSFTRSILN (72 aa)). Disordered stretches follow at residues 409-454 (IPAS…DTIW) and 623-648 (LNLD…DEYE). The span at 416 to 428 (TSCSSETSHHSPS) shows a compositional bias: low complexity. The 133-residue stretch at 782–914 (SNNRIKGGSK…LLKEVNQKFK (133 aa)) folds into the N-terminal Ras-GEF domain. In terms of domain architecture, Ras-GEF spans 952 to 1199 (DPVLFATQLT…YQLSLIIEPK (248 aa)). Residues 1201–1252 (RKKVVPNSNSNNKSQEKSRDDQTDEGKTSTKKDRFSKFQLHKTKKKAPKVSK) are disordered. Residues 1214–1236 (SQEKSRDDQTDEGKTSTKKDRFS) show a composition bias toward basic and acidic residues. Residues 1239 to 1252 (QLHKTKKKAPKVSK) are compositionally biased toward basic residues.

Functionally, promotes the exchange of Ras-bound GDP by GTP. The chain is Guanine nucleotide exchange factor SDC25 (SDC25) from Saccharomyces cerevisiae (strain YJM789) (Baker's yeast).